Reading from the N-terminus, the 138-residue chain is MSSTDDKPRKVQKTEAEWRAQLDPMQFEVTRHGATERAFTGKYADHWQEGVYHCVGCNAPLFDSGTKFDAGCGWPSYFQPLRGEIIDRVVDRSHGMVRVEVRCQDCGAHLGHVFPDGPEPTGERYCINSASLGFEPRK.

The region spanning 15–137 (EAEWRAQLDP…NSASLGFEPR (123 aa)) is the MsrB domain. Zn(2+) contacts are provided by Cys54, Cys57, Cys103, and Cys106. Residue Cys126 is the Nucleophile of the active site.

This sequence belongs to the MsrB Met sulfoxide reductase family. Zn(2+) serves as cofactor.

It catalyses the reaction L-methionyl-[protein] + [thioredoxin]-disulfide + H2O = L-methionyl-(R)-S-oxide-[protein] + [thioredoxin]-dithiol. In Methylibium petroleiphilum (strain ATCC BAA-1232 / LMG 22953 / PM1), this protein is Peptide methionine sulfoxide reductase MsrB.